We begin with the raw amino-acid sequence, 462 residues long: Protoheme IX farnesyltransferase, mitochondrial (462 aa).

The next 7 helical transmembrane spans lie at 152–172, 173–193, 237–257, 269–289, 296–316, 348–368, and 411–431; these read LTILVTLSSICSYAISPYTVS, LPELLFLTMGTALCSGAANAI, MLFLGVNPTVSFLGFLNIVLY, IINTWVGAIVGAIPPLMGWAA, PGAWCLAGLLYAWQFPHFNAL, SLLMFPLCFGLSYFGITDWVF, and AKKLFWGSVWHLPAVLILAML.

This sequence belongs to the UbiA prenyltransferase family.

It is found in the mitochondrion membrane. Converts protoheme IX and farnesyl diphosphate to heme O. This chain is Protoheme IX farnesyltransferase, mitochondrial (COX10), found in Debaryomyces hansenii (strain ATCC 36239 / CBS 767 / BCRC 21394 / JCM 1990 / NBRC 0083 / IGC 2968) (Yeast).